The sequence spans 305 residues: Peroxisome biogenesis factor 2 (305 aa).

Topologically, residues 1–15 (MASRKENAKSANRVL) are peroxisomal matrix. A helical membrane pass occupies residues 16–42 (RISQLDALELNKALEQLVWSQFTQCFH). The Cytoplasmic segment spans residues 43–48 (GFKPGL). The chain crosses the membrane as a helical span at residues 49–74 (LARFEPEVKACLWVFLWRFTIYSKNA). Residues 75–98 (TVGQSVLNIKYKNDFSPNLRYQPP) lie on the Peroxisomal matrix side of the membrane. Lys84 carries the post-translational modification N6-acetyllysine. The chain crosses the membrane as a helical span at residues 99-125 (SKNQKIWYAVCTIGGRWLEERCYDLFR). The Cytoplasmic portion of the chain corresponds to 126–133 (NHHLASFG). A helical transmembrane segment spans residues 134–160 (KVKQCVNFVIGLLKLGGLINFLIFLQR). Residues 161 to 187 (GKFATLTERLLGIHSVFCKPQNICEVG) lie on the Peroxisomal matrix side of the membrane. The chain crosses the membrane as a helical span at residues 188 to 211 (FEYMNRELLWHGFAEFLIFLLPLI). The Cytoplasmic segment spans residues 212–305 (NVQKLKAKLS…GIEMSEVNAL (94 aa)). The Zn(2+) site is built by Cys244, Cys247, Cys259, His261, Cys264, Cys267, Cys280, and Cys283. The segment at 244-284 (CALCGEWPTMPHTIGCEHIFCYFCAKSSFLFDVYFTCPKCG) adopts an RING-type zinc-finger fold.

This sequence belongs to the pex2/pex10/pex12 family. In terms of assembly, component of the PEX2-PEX10-PEX12 retrotranslocation channel, composed of PEX2, PEX10 and PEX12. In terms of processing, forms intramolecular and intermolecular disulfide bonds in response to reactive oxygen species (ROS), promoting higher stability.

It localises to the peroxisome membrane. It catalyses the reaction [E2 ubiquitin-conjugating enzyme]-S-ubiquitinyl-L-cysteine + [acceptor protein]-L-cysteine = [E2 ubiquitin-conjugating enzyme]-L-cysteine + [acceptor protein]-S-ubiquitinyl-L-cysteine.. The enzyme catalyses S-ubiquitinyl-[E2 ubiquitin-conjugating enzyme]-L-cysteine + [acceptor protein]-L-lysine = [E2 ubiquitin-conjugating enzyme]-L-cysteine + N(6)-ubiquitinyl-[acceptor protein]-L-lysine.. The protein operates within protein modification; protein ubiquitination. E3 ubiquitin-protein ligase component of a retrotranslocation channel required for peroxisome organization by mediating export of the PEX5 receptor from peroxisomes to the cytosol, thereby promoting PEX5 recycling. The retrotranslocation channel is composed of PEX2, PEX10 and PEX12; each subunit contributing transmembrane segments that coassemble into an open channel that specifically allows the passage of PEX5 through the peroxisomal membrane. PEX2 also regulates peroxisome organization by acting as a E3 ubiquitin-protein ligase. PEX2 ubiquitinates PEX5 during its passage through the retrotranslocation channel: catalyzes monoubiquitination of PEX5 at 'Cys-11', a modification that acts as a signal for PEX5 extraction into the cytosol. Required for pexophagy in response to starvation by mediating ubiquitination of peroxisomal proteins, such as PEX5 and ABCD3/PMP70. Also involved in the response to reactive oxygen species (ROS) by mediating 'Lys-48'-linked polyubiquitination and subsequent degradation of PNPLA2/ATGL, thereby regulating lipolysis. This Homo sapiens (Human) protein is Peroxisome biogenesis factor 2.